We begin with the raw amino-acid sequence, 135 residues long: uncharacterized protein (135 aa).

Residues 8-123 (PQGTIVLKTL…IFIYVAIDET (116 aa)) enclose the HotDog ACOT-type domain.

It belongs to the acyl coenzyme A hydrolase family.

This is an uncharacterized protein from Buchnera aphidicola subsp. Schizaphis graminum (strain Sg).